A 409-amino-acid chain; its full sequence is tRNA-specific 2-thiouridylase MnmA (409 aa).

ATP contacts are provided by residues 40–47 and Leu-66; that span reads GLSGGVDS. Catalysis depends on Cys-127, which acts as the Nucleophile. A disulfide bridge connects residues Cys-127 and Cys-237. Gly-152 contacts ATP. The tract at residues 156–179 is disordered; sequence RIRHREDPEPQQALPGDSSGRHQL. The segment at 187-189 is interaction with tRNA; the sequence is KDQ. Cys-237 (cysteine persulfide intermediate) is an active-site residue. Residues 342–343 are interaction with tRNA; it reads RY.

This sequence belongs to the MnmA/TRMU family.

Its subcellular location is the cytoplasm. The enzyme catalyses S-sulfanyl-L-cysteinyl-[protein] + uridine(34) in tRNA + AH2 + ATP = 2-thiouridine(34) in tRNA + L-cysteinyl-[protein] + A + AMP + diphosphate + H(+). Catalyzes the 2-thiolation of uridine at the wobble position (U34) of tRNA, leading to the formation of s(2)U34. The chain is tRNA-specific 2-thiouridylase MnmA from Prochlorococcus marinus (strain MIT 9303).